The chain runs to 251 residues: Imidazole glycerol phosphate synthase subunit HisF (251 aa).

Residues aspartate 11 and aspartate 130 contribute to the active site.

This sequence belongs to the HisA/HisF family. As to quaternary structure, heterodimer of HisH and HisF.

Its subcellular location is the cytoplasm. The enzyme catalyses 5-[(5-phospho-1-deoxy-D-ribulos-1-ylimino)methylamino]-1-(5-phospho-beta-D-ribosyl)imidazole-4-carboxamide + L-glutamine = D-erythro-1-(imidazol-4-yl)glycerol 3-phosphate + 5-amino-1-(5-phospho-beta-D-ribosyl)imidazole-4-carboxamide + L-glutamate + H(+). It participates in amino-acid biosynthesis; L-histidine biosynthesis; L-histidine from 5-phospho-alpha-D-ribose 1-diphosphate: step 5/9. IGPS catalyzes the conversion of PRFAR and glutamine to IGP, AICAR and glutamate. The HisF subunit catalyzes the cyclization activity that produces IGP and AICAR from PRFAR using the ammonia provided by the HisH subunit. This is Imidazole glycerol phosphate synthase subunit HisF from Streptococcus mutans serotype c (strain ATCC 700610 / UA159).